Consider the following 157-residue polypeptide: Small ribosomal subunit protein uS7 (157 aa).

The protein belongs to the universal ribosomal protein uS7 family. Part of the 30S ribosomal subunit. Contacts proteins S9 and S11.

Functionally, one of the primary rRNA binding proteins, it binds directly to 16S rRNA where it nucleates assembly of the head domain of the 30S subunit. Is located at the subunit interface close to the decoding center, probably blocks exit of the E-site tRNA. This is Small ribosomal subunit protein uS7 from Verminephrobacter eiseniae (strain EF01-2).